A 511-amino-acid chain; its full sequence is MIHDMIKTIEHFAETQADFPVYDILGEVHTYGQLKVDSDSLAAHIDSLGLVEKSPVLVFGGQEYEMLATFVALTKSGHAYIPVDQHSALDRIQAIMTVAQPSLIISIGEFPLEVDNVPILDVSQVSAIFEEKTPYEVTHSVKGDDNYYIIFTSGTTGLPKGVQISHDNLLSFTNWMISDDEFSVPERPQMLAQPPYSFDLSVMYWAPTLAMGGTLFALPKTVVNDFKKLFATINELPVQVWTSTPSFADMALLSNDFNSETLPQLTHFYFDGEELTVKTAQKLRQRFPKARIVNAYGPTEATVALSAVAITDEMLETCKRLPIGYTKDDSPTYVIDEEGHKLPNGEQGEIIIAGPAVSKGYLNNPEKTAEAFFQFEGLPAYHTGDLGSMTDEGLLLYGGRMDFQIKFNGYRIELEDVSQNLNKSQYVKSAVAVPRYNKDHKVQNLLAYIVLKEGVRDDFERDLDLTKAIKEDLKDIMMDYMMPSKFIYREDLPLTPNGKIDIKGLMSEVNK.

Threonine 152–serine 153 provides a ligand contact to ATP. Aspartate 199 serves as a coordination point for D-alanine. Asparagine 294–threonine 299 provides a ligand contact to ATP. Position 303 (valine 303) interacts with D-alanine. ATP contacts are provided by residues aspartate 385, tyrosine 397–arginine 400, and lysine 499. Lysine 499 serves as a coordination point for D-alanine.

Belongs to the ATP-dependent AMP-binding enzyme family. DltA subfamily.

It localises to the cytoplasm. The catalysed reaction is holo-[D-alanyl-carrier protein] + D-alanine + ATP = D-alanyl-[D-alanyl-carrier protein] + AMP + diphosphate. The protein operates within cell wall biogenesis; lipoteichoic acid biosynthesis. Its function is as follows. Catalyzes the first step in the D-alanylation of lipoteichoic acid (LTA), the activation of D-alanine and its transfer onto the D-alanyl carrier protein (Dcp) DltC. In an ATP-dependent two-step reaction, forms a high energy D-alanyl-AMP intermediate, followed by transfer of the D-alanyl residue as a thiol ester to the phosphopantheinyl prosthetic group of the Dcp. D-alanylation of LTA plays an important role in modulating the properties of the cell wall in Gram-positive bacteria, influencing the net charge of the cell wall. This chain is D-alanine--D-alanyl carrier protein ligase, found in Streptococcus agalactiae serotype III (strain NEM316).